An 89-amino-acid polypeptide reads, in one-letter code: Small ribosomal subunit protein uS15 (89 aa).

It belongs to the universal ribosomal protein uS15 family. As to quaternary structure, part of the 30S ribosomal subunit. Forms a bridge to the 50S subunit in the 70S ribosome, contacting the 23S rRNA.

In terms of biological role, one of the primary rRNA binding proteins, it binds directly to 16S rRNA where it helps nucleate assembly of the platform of the 30S subunit by binding and bridging several RNA helices of the 16S rRNA. Forms an intersubunit bridge (bridge B4) with the 23S rRNA of the 50S subunit in the ribosome. This chain is Small ribosomal subunit protein uS15, found in Bartonella henselae (strain ATCC 49882 / DSM 28221 / CCUG 30454 / Houston 1) (Rochalimaea henselae).